The following is a 670-amino-acid chain: CLK4-associating serine/arginine rich protein (670 aa).

Ser101 is subject to Phosphoserine. 2 disordered regions span residues 171–232 (TVAE…GMAD) and 258–670 (EKAM…HYRH). Residues 182-214 (PEEEESPAEEESNSDEDEVIPDIDVEVDVDELN) are compositionally biased toward acidic residues. Positions 265–283 (RRSRRQRREFREKRLRGRK) are enriched in basic residues. Ser285 and Ser294 each carry phosphoserine. Residues 290-313 (ARRDSPTYDPYKRSPSESSSESRS) show a composition bias toward basic and acidic residues. The residue at position 327 (Thr327) is a Phosphothreonine. Ser331 and Ser335 each carry phosphoserine. Over residues 340-355 (AAAAAAAAASGAATGK) the composition is skewed to low complexity. Over residues 356-365 (PPAPPQPGGP) the composition is skewed to pro residues. A compositionally biased stretch (low complexity) spans 378-400 (STSSSSSSASRTSSSRSRSSSSS). Basic residues-rich tracts occupy residues 411–443 (SGRHARSRSRSWSRSRSRSRRYSRSRSRGRRHS) and 481–491 (RGGRGPRHHSS). Residues 492 to 529 (SRSSWSLSPSRSRSLTRSRSPSLSRSRSLSRSRSQSHS) show a composition bias toward low complexity. Phosphoserine is present on Ser543. Position 569 is a phosphothreonine (Thr569). The stretch at 581–643 (ALNRQFKADK…ERQYSRQSRS (63 aa)) forms a coiled coil. Basic and acidic residues-rich tracts occupy residues 586-613 (FKADKKAAQEKMIQQEHERQEREDELRA) and 621-637 (KERERREKEREEWERQY). Low complexity predominate over residues 638-647 (SRQSRSPSPR). The span at 655-670 (SRRRSRSRSRSPHYRH) shows a compositional bias: basic residues.

The protein belongs to the splicing factor SR family. As to quaternary structure, probably interacts with CLK4. In terms of processing, phosphorylated in vitro by CLK4.

Its subcellular location is the nucleus. In terms of biological role, probably functions as an alternative splicing regulator. May regulate the mRNA splicing of genes such as CLK1. May act by regulating members of the CLK kinase family. The chain is CLK4-associating serine/arginine rich protein (CLASRP) from Bos taurus (Bovine).